Here is a 185-residue protein sequence, read N- to C-terminus: Threonylcarbamoyl-AMP synthase (185 aa).

The YrdC-like domain occupies A7–R185.

Belongs to the SUA5 family. TsaC subfamily.

It is found in the cytoplasm. It catalyses the reaction L-threonine + hydrogencarbonate + ATP = L-threonylcarbamoyladenylate + diphosphate + H2O. Required for the formation of a threonylcarbamoyl group on adenosine at position 37 (t(6)A37) in tRNAs that read codons beginning with adenine. Catalyzes the conversion of L-threonine, HCO(3)(-)/CO(2) and ATP to give threonylcarbamoyl-AMP (TC-AMP) as the acyladenylate intermediate, with the release of diphosphate. The protein is Threonylcarbamoyl-AMP synthase of Laribacter hongkongensis (strain HLHK9).